A 451-amino-acid chain; its full sequence is Serine--tRNA ligase, cytoplasmic (451 aa).

Cysteine 213 and cysteine 244 form a disulfide bridge. An L-serine-binding site is contributed by 238–240 (TAE). Residues 269-271 (RKE) and valine 285 each bind ATP. Glutamate 292 lines the L-serine pocket. ATP is bound at residue 358–361 (ELVS). Threonine 396 serves as a coordination point for L-serine.

The protein belongs to the class-II aminoacyl-tRNA synthetase family. Type-1 seryl-tRNA synthetase subfamily. Homodimer. The tRNA molecule binds across the dimer.

The protein localises to the cytoplasm. It is found in the cytosol. The catalysed reaction is tRNA(Ser) + L-serine + ATP = L-seryl-tRNA(Ser) + AMP + diphosphate + H(+). Its function is as follows. Catalyzes the attachment of serine to tRNA(Ser) in a two-step reaction: serine is first activated by ATP to form Ser-AMP and then transferred to the acceptor end of tRNA(Ser). The chain is Serine--tRNA ligase, cytoplasmic from Arabidopsis thaliana (Mouse-ear cress).